The primary structure comprises 436 residues: Carboxypeptidase A5 (436 aa).

The N-terminal stretch at 1–33 is a signal peptide; the sequence is MQGTPAGGTSPGPSPMDRQTLLVFSLILAAALG. Residues 34 to 126 constitute a propeptide, activation peptide; that stretch reads QMNFTGDQVL…EREAMAKSRR (93 aa). Residues 138–431 enclose the Peptidase M14 domain; that stretch reads SYHTLEEISS…MALRTIMEHT (294 aa). H196 and E199 together coordinate Zn(2+). Substrate is bound by residues 196–199, R254, and 271–272; these read HSRE and NR. Residues C265 and C288 are joined by a disulfide bond. H323 lines the Zn(2+) pocket. Substrate-binding positions include 324 to 325 and Y375; that span reads SY. E397 (proton donor/acceptor) is an active-site residue.

The protein belongs to the peptidase M14 family. The cofactor is Zn(2+).

Its subcellular location is the secreted. This Macaca fascicularis (Crab-eating macaque) protein is Carboxypeptidase A5 (CPA5).